The following is a 278-amino-acid chain: 4-deoxy-L-threo-5-hexosulose-uronate ketol-isomerase (278 aa).

Residues His196, His198, Glu203, and His245 each coordinate Zn(2+).

It belongs to the KduI family. Zn(2+) is required as a cofactor.

The enzyme catalyses 5-dehydro-4-deoxy-D-glucuronate = 3-deoxy-D-glycero-2,5-hexodiulosonate. The protein operates within glycan metabolism; pectin degradation; 2-dehydro-3-deoxy-D-gluconate from pectin: step 4/5. Functionally, catalyzes the isomerization of 5-dehydro-4-deoxy-D-glucuronate to 3-deoxy-D-glycero-2,5-hexodiulosonate. The sequence is that of 4-deoxy-L-threo-5-hexosulose-uronate ketol-isomerase from Shigella flexneri.